Reading from the N-terminus, the 620-residue chain is Glutathione-regulated potassium-efflux system protein KefC (620 aa).

Transmembrane regions (helical) follow at residues 4 to 24, 26 to 46, 54 to 74, 86 to 106, 114 to 134, 149 to 169, 178 to 198, 218 to 238, 271 to 291, 296 to 316, 326 to 346, and 359 to 379; these read HTLI…PVAV, LGLG…PWGL, AILH…GLEL, VFGG…GFCV, VALL…MQAM, FAVL…IPLL, ASAF…VVLL, VFSA…EEAG, LLLG…TLVA, VLTL…LVAK, RWFA…FGAA, and ALTL…VLLT. Residues 399–518 form the RCK N-terminal domain; it reads QPRVIIAGFG…AGVAQPERET (120 aa). Positions 596-620 are disordered; it reads HGWQGTREGKHTGNDADEPEVKPQP.

This sequence belongs to the monovalent cation:proton antiporter 2 (CPA2) transporter (TC 2.A.37) family. KefC subfamily. Homodimer. Interacts with the regulatory subunit KefF.

Its subcellular location is the cell inner membrane. Its function is as follows. Pore-forming subunit of a potassium efflux system that confers protection against electrophiles. Catalyzes K(+)/H(+) antiport. This chain is Glutathione-regulated potassium-efflux system protein KefC, found in Cronobacter sakazakii (strain ATCC BAA-894) (Enterobacter sakazakii).